A 571-amino-acid polypeptide reads, in one-letter code: Cationic amino acid transporter 8 (571 aa).

Asn35 is a glycosylation site (N-linked (GlcNAc...) asparagine). A run of 6 helical transmembrane segments spans residues 39 to 59 (FWLLVIIVIYTATSACIYFDW), 94 to 114 (SLYPITLAIHFTMSVFCGFLY), 117 to 137 (IGPKFTAIIGQMCNIMSWVFL), 148 to 168 (FLSFVFLGLGADTAFIPILTI), 177 to 197 (TFILTVVGAAASLSYAVPATL), and 217 to 237 (IFLILVPCLLVATFLLPLMPF). 3 N-linked (GlcNAc...) asparagine glycosylation sites follow: Asn298, Asn325, and Asn346. The helical transmembrane segment at 365-385 (LFFKVLLSYPSICIIVYFILF) threads the bilayer. N-linked (GlcNAc...) asparagine glycosylation occurs at Asn386. 5 consecutive transmembrane segments (helical) span residues 405–425 (SIINIINILMPISCIPCIIFG), 433–453 (SAIIIILMNAFSALMHLTALI), 461–481 (VSAFLYMCVTSIYTSQIYCFI), 488–508 (VVFGKLLGFASLCGGLFSLLC), and 528–548 (VVLLLVIAFILMFLPLTVLYF).

It belongs to the SLC43A transporter (TC 2.A.1.44) family.

The protein localises to the membrane. The catalysed reaction is L-arginine(in) = L-arginine(out). In terms of biological role, sodium-independent cationic amino acid transporter. Transports L-arginine, L-lysine, L-histidine and L-ornithine. The polypeptide is Cationic amino acid transporter 8 (Plasmodium vivax (strain Salvador I)).